The primary structure comprises 432 residues: Adenylosuccinate synthetase (432 aa).

GTP-binding positions include 13–19 and 41–43; these read GDEGKGK and GHT. Residue D14 is the Proton acceptor of the active site. Mg(2+)-binding residues include D14 and G41. IMP-binding positions include 14–17, 39–42, T130, R144, Q225, T240, and R304; these read DEGK and NAGH. The Proton donor role is filled by H42. Residue 300–306 participates in substrate binding; the sequence is ATTGRKR. GTP contacts are provided by residues R306, 332–334, and 414–416; these read KLD and STG.

Belongs to the adenylosuccinate synthetase family. Homodimer. It depends on Mg(2+) as a cofactor.

It is found in the cytoplasm. It catalyses the reaction IMP + L-aspartate + GTP = N(6)-(1,2-dicarboxyethyl)-AMP + GDP + phosphate + 2 H(+). Its pathway is purine metabolism; AMP biosynthesis via de novo pathway; AMP from IMP: step 1/2. Functionally, plays an important role in the de novo pathway of purine nucleotide biosynthesis. Catalyzes the first committed step in the biosynthesis of AMP from IMP. This is Adenylosuccinate synthetase from Alkalilimnicola ehrlichii (strain ATCC BAA-1101 / DSM 17681 / MLHE-1).